A 475-amino-acid chain; its full sequence is Ribulose bisphosphate carboxylase large chain (475 aa).

Residues 1–2 constitute a propeptide that is removed on maturation; that stretch reads MS. Pro3 carries the post-translational modification N-acetylproline. Residue Lys14 is modified to N6,N6,N6-trimethyllysine. Asn123 and Thr173 together coordinate substrate. The Proton acceptor role is filled by Lys175. Residue Lys177 coordinates substrate. Residues Lys201, Asp203, and Glu204 each coordinate Mg(2+). Lys201 bears the N6-carboxylysine mark. His294 functions as the Proton acceptor in the catalytic mechanism. The substrate site is built by His327 and Ser379.

This sequence belongs to the RuBisCO large chain family. Type I subfamily. Heterohexadecamer of 8 large chains and 8 small chains; disulfide-linked. The disulfide link is formed within the large subunit homodimers. Mg(2+) serves as cofactor. The disulfide bond which can form in the large chain dimeric partners within the hexadecamer appears to be associated with oxidative stress and protein turnover.

It is found in the plastid. The protein localises to the chloroplast. It carries out the reaction 2 (2R)-3-phosphoglycerate + 2 H(+) = D-ribulose 1,5-bisphosphate + CO2 + H2O. The enzyme catalyses D-ribulose 1,5-bisphosphate + O2 = 2-phosphoglycolate + (2R)-3-phosphoglycerate + 2 H(+). Functionally, ruBisCO catalyzes two reactions: the carboxylation of D-ribulose 1,5-bisphosphate, the primary event in carbon dioxide fixation, as well as the oxidative fragmentation of the pentose substrate in the photorespiration process. Both reactions occur simultaneously and in competition at the same active site. This chain is Ribulose bisphosphate carboxylase large chain, found in Amaranthus hypochondriacus (Prince-of-Wales feather).